The chain runs to 303 residues: ATP-dependent Clp protease ATP-binding subunit CLPT3, chloroplastic (303 aa).

The transit peptide at 1–37 (MLLANAPHNGCSRLQQVTLLRASGAKLHRKRALTVVA) directs the protein to the chloroplast. Disordered regions lie at residues 185–214 (ASTE…RDSD) and 278–303 (RDDN…DEYE).

The protein belongs to the ClpA/ClpB family.

The protein localises to the plastid. Its subcellular location is the chloroplast. Functionally, accessory protein regulating the assembly of the plastid Clp protease system. The sequence is that of ATP-dependent Clp protease ATP-binding subunit CLPT3, chloroplastic from Chlamydomonas reinhardtii (Chlamydomonas smithii).